The following is a 106-amino-acid chain: Large ribosomal subunit protein uL24 (106 aa).

It belongs to the universal ribosomal protein uL24 family. Part of the 50S ribosomal subunit.

Its function is as follows. One of two assembly initiator proteins, it binds directly to the 5'-end of the 23S rRNA, where it nucleates assembly of the 50S subunit. One of the proteins that surrounds the polypeptide exit tunnel on the outside of the subunit. This chain is Large ribosomal subunit protein uL24, found in Alkalilimnicola ehrlichii (strain ATCC BAA-1101 / DSM 17681 / MLHE-1).